Consider the following 413-residue polypeptide: Type II methyltransferase M.NaeI (413 aa).

The SAM-dependent MTase C5-type domain maps to 4-317 (LEVVEICAGA…KRIRAALNME (314 aa)). The active site involves Cys-78.

This sequence belongs to the class I-like SAM-binding methyltransferase superfamily. C5-methyltransferase family.

It carries out the reaction a 2'-deoxycytidine in DNA + S-adenosyl-L-methionine = a 5-methyl-2'-deoxycytidine in DNA + S-adenosyl-L-homocysteine + H(+). A methylase that recognizes the double-stranded sequence 5'-GCCGGC-3', methylates C-? on both strands, and protects the DNA from cleavage by the NaeI endonuclease. The polypeptide is Type II methyltransferase M.NaeI (Lentzea aerocolonigenes (Lechevalieria aerocolonigenes)).